We begin with the raw amino-acid sequence, 463 residues long: uncharacterized protein (463 aa).

12 helical membrane-spanning segments follow: residues 17 to 37 (ISLM…SASA), 40 to 60 (LAGP…FFIM), 97 to 117 (WFLW…YMGF), 122 to 142 (VPNW…NFLA), 153 to 173 (FALI…LMII), 201 to 221 (GVLL…MIGV), 244 to 264 (ILIF…WQEI), 278 to 298 (VGIP…ALSS), 335 to 355 (AVLA…VVPA), 357 to 377 (VFTW…AIIL), 401 to 421 (LFPF…ILMA), and 429 to 449 (AVII…GKGF).

It belongs to the amino acid-polyamine-organocation (APC) superfamily.

It is found in the cell membrane. This is an uncharacterized protein from Bacillus subtilis (strain 168).